Here is a 287-residue protein sequence, read N- to C-terminus: Small ribosomal subunit biogenesis GTPase RsgA (287 aa).

In terms of domain architecture, CP-type G spans 61–218 (SSELIRPTVA…LVDTPGFTTL (158 aa)). Residues 110–113 (NKED) and 161–169 (GPSGAGKST) each bind GTP. The Zn(2+) site is built by cysteine 242, cysteine 247, histidine 249, and cysteine 255.

This sequence belongs to the TRAFAC class YlqF/YawG GTPase family. RsgA subfamily. As to quaternary structure, monomer. Associates with 30S ribosomal subunit, binds 16S rRNA. Zn(2+) is required as a cofactor.

The protein localises to the cytoplasm. Its function is as follows. One of several proteins that assist in the late maturation steps of the functional core of the 30S ribosomal subunit. Helps release RbfA from mature subunits. May play a role in the assembly of ribosomal proteins into the subunit. Circularly permuted GTPase that catalyzes slow GTP hydrolysis, GTPase activity is stimulated by the 30S ribosomal subunit. In Clostridium perfringens (strain ATCC 13124 / DSM 756 / JCM 1290 / NCIMB 6125 / NCTC 8237 / Type A), this protein is Small ribosomal subunit biogenesis GTPase RsgA.